Reading from the N-terminus, the 163-residue chain is Biotin carboxyl carrier protein of acetyl-CoA carboxylase (163 aa).

The Biotinyl-binding domain occupies glycine 85–valine 161. N6-biotinyllysine is present on lysine 127.

In terms of assembly, homodimer.

Its pathway is lipid metabolism; fatty acid biosynthesis. Functionally, this protein is a component of the acetyl coenzyme A carboxylase complex; first, biotin carboxylase catalyzes the carboxylation of the carrier protein and then the transcarboxylase transfers the carboxyl group to form malonyl-CoA. The chain is Biotin carboxyl carrier protein of acetyl-CoA carboxylase (accB) from Chlamydia muridarum (strain MoPn / Nigg).